Consider the following 270-residue polypeptide: Flavin-dependent thymidylate synthase (270 aa).

Residues 13 to 218 (GFVRLVDQMG…PLAWAAFEEH (206 aa)) form the ThyX domain. Residues serine 59, 82-84 (RHR), and glutamate 90 each bind FAD. Residues 79 to 82 (QWFR), 90 to 94 (EISGR), and arginine 157 each bind dUMP. Positions 82-92 (RHRTASVNEIS) match the ThyX motif motif. FAD-binding positions include 173–175 (DLH) and histidine 179. Arginine 184 lines the dUMP pocket. Arginine 184 functions as the Involved in ionization of N3 of dUMP, leading to its activation in the catalytic mechanism.

This sequence belongs to the thymidylate synthase ThyX family. In terms of assembly, homotetramer. It depends on FAD as a cofactor.

The catalysed reaction is dUMP + (6R)-5,10-methylene-5,6,7,8-tetrahydrofolate + NADPH + H(+) = dTMP + (6S)-5,6,7,8-tetrahydrofolate + NADP(+). It functions in the pathway pyrimidine metabolism; dTTP biosynthesis. Its function is as follows. Catalyzes the reductive methylation of 2'-deoxyuridine-5'-monophosphate (dUMP) to 2'-deoxythymidine-5'-monophosphate (dTMP) while utilizing 5,10-methylenetetrahydrofolate (mTHF) as the methyl donor, and NADPH and FADH(2) as the reductant. This Thermus thermophilus (strain ATCC BAA-163 / DSM 7039 / HB27) protein is Flavin-dependent thymidylate synthase.